The primary structure comprises 130 residues: Large ribosomal subunit protein bL12 (130 aa).

It belongs to the bacterial ribosomal protein bL12 family. Homodimer. Part of the ribosomal stalk of the 50S ribosomal subunit. Forms a multimeric L10(L12)X complex, where L10 forms an elongated spine to which 2 to 4 L12 dimers bind in a sequential fashion. Binds GTP-bound translation factors.

Its function is as follows. Forms part of the ribosomal stalk which helps the ribosome interact with GTP-bound translation factors. Is thus essential for accurate translation. This chain is Large ribosomal subunit protein bL12, found in Mycobacterium bovis (strain ATCC BAA-935 / AF2122/97).